A 299-amino-acid polypeptide reads, in one-letter code: Probable lipid kinase YegS (299 aa).

Positions 2–133 (ANFPASLLIL…IDMAMVNDKT (132 aa)) constitute a DAGKc domain. ATP is bound by residues Thr40, 66–72 (GDGTINE), and Thr95. The Mg(2+) site is built by Leu215, Asp218, and Leu220. Catalysis depends on Glu271, which acts as the Proton acceptor.

It belongs to the diacylglycerol/lipid kinase family. YegS lipid kinase subfamily. Mg(2+) is required as a cofactor. It depends on Ca(2+) as a cofactor.

It localises to the cytoplasm. Its function is as follows. Probably phosphorylates lipids; the in vivo substrate is unknown. This Salmonella choleraesuis (strain SC-B67) protein is Probable lipid kinase YegS.